Here is a 458-residue protein sequence, read N- to C-terminus: Ribosomal protein uS12 methylthiotransferase RimO (458 aa).

In terms of domain architecture, MTTase N-terminal spans 8–119 (PTVAFAHLGC…IVDVLQRVEV (112 aa)). [4Fe-4S] cluster-binding residues include cysteine 17, cysteine 53, cysteine 82, cysteine 157, cysteine 161, and cysteine 164. A Radical SAM core domain is found at 143–372 (TTDQAVAFLK…MALQQPISAE (230 aa)). Residues 375–446 (SRWVGRTVDV…IYDLNGQMVG (72 aa)) form the TRAM domain.

The protein belongs to the methylthiotransferase family. RimO subfamily. Requires [4Fe-4S] cluster as cofactor.

The protein localises to the cytoplasm. It carries out the reaction L-aspartate(89)-[ribosomal protein uS12]-hydrogen + (sulfur carrier)-SH + AH2 + 2 S-adenosyl-L-methionine = 3-methylsulfanyl-L-aspartate(89)-[ribosomal protein uS12]-hydrogen + (sulfur carrier)-H + 5'-deoxyadenosine + L-methionine + A + S-adenosyl-L-homocysteine + 2 H(+). Its function is as follows. Catalyzes the methylthiolation of an aspartic acid residue of ribosomal protein uS12. The polypeptide is Ribosomal protein uS12 methylthiotransferase RimO (Synechococcus sp. (strain CC9605)).